A 163-amino-acid polypeptide reads, in one-letter code: Nucleotide-binding protein Pnap_1080 (163 aa).

It belongs to the YajQ family.

In terms of biological role, nucleotide-binding protein. In Polaromonas naphthalenivorans (strain CJ2), this protein is Nucleotide-binding protein Pnap_1080.